We begin with the raw amino-acid sequence, 78 residues long: Large ribosomal subunit protein bL28 (78 aa).

This sequence belongs to the bacterial ribosomal protein bL28 family.

The polypeptide is Large ribosomal subunit protein bL28 (Acaryochloris marina (strain MBIC 11017)).